Reading from the N-terminus, the 377-residue chain is Chaperone protein DnaJ (377 aa).

The 66-residue stretch at 5-70 (DYYEVLGVAK…QKRAAYDRYG (66 aa)) folds into the J domain. The segment at 137–215 (GFDTEIRVPS…CDGVGRTRRN (79 aa)) adopts a CR-type zinc-finger fold. The Zn(2+) site is built by Cys150, Cys153, Cys167, Cys170, Cys189, Cys192, Cys203, and Cys206. CXXCXGXG motif repeat units lie at residues 150 to 157 (CDTCHGSG), 167 to 174 (CRTCGGSG), 189 to 196 (CPTCHGTG), and 203 to 210 (CPSCDGVG).

It belongs to the DnaJ family. As to quaternary structure, homodimer. It depends on Zn(2+) as a cofactor.

The protein localises to the cytoplasm. Participates actively in the response to hyperosmotic and heat shock by preventing the aggregation of stress-denatured proteins and by disaggregating proteins, also in an autonomous, DnaK-independent fashion. Unfolded proteins bind initially to DnaJ; upon interaction with the DnaJ-bound protein, DnaK hydrolyzes its bound ATP, resulting in the formation of a stable complex. GrpE releases ADP from DnaK; ATP binding to DnaK triggers the release of the substrate protein, thus completing the reaction cycle. Several rounds of ATP-dependent interactions between DnaJ, DnaK and GrpE are required for fully efficient folding. Also involved, together with DnaK and GrpE, in the DNA replication of plasmids through activation of initiation proteins. The polypeptide is Chaperone protein DnaJ (Bordetella parapertussis (strain 12822 / ATCC BAA-587 / NCTC 13253)).